The following is a 473-amino-acid chain: ATP synthase subunit beta, chloroplastic (473 aa).

172-179 serves as a coordination point for ATP; it reads GGAGVGKT.

This sequence belongs to the ATPase alpha/beta chains family. F-type ATPases have 2 components, CF(1) - the catalytic core - and CF(0) - the membrane proton channel. CF(1) has five subunits: alpha(3), beta(3), gamma(1), delta(1), epsilon(1). CF(0) has four main subunits: a(1), b(1), b'(1) and c(9-12).

It localises to the plastid. Its subcellular location is the chloroplast thylakoid membrane. It carries out the reaction ATP + H2O + 4 H(+)(in) = ADP + phosphate + 5 H(+)(out). Produces ATP from ADP in the presence of a proton gradient across the membrane. The catalytic sites are hosted primarily by the beta subunits. This Pteridium esculentum (Bracken fern) protein is ATP synthase subunit beta, chloroplastic.